A 162-amino-acid chain; its full sequence is Beta-carotene hydroxylase (162 aa).

One can recognise a Fatty acid hydroxylase domain in the interval 8 to 135 (VATVLVMELT…GRDHCVSFGF (128 aa)).

Belongs to the sterol desaturase family.

It carries out the reaction all-trans-beta-carotene + 4 reduced [2Fe-2S]-[ferredoxin] + 2 O2 + 4 H(+) = all-trans-zeaxanthin + 4 oxidized [2Fe-2S]-[ferredoxin] + 2 H2O. It participates in carotenoid biosynthesis; astaxanthin biosynthesis. In terms of biological role, catalyzes the hydroxylation reaction from beta-carotene to zeaxanthin via beta-cryptoxanthin. The polypeptide is Beta-carotene hydroxylase (crtZ) (Paracoccus sp. (strain PC1) (Alcaligenes sp. (strain PC1))).